The chain runs to 1106 residues: Solute carrier family 12 member 7 (1106 aa).

The Cytoplasmic portion of the chain corresponds to Met-1 to Gly-143. Positions Gly-17–Asp-83 are disordered. A phosphoserine mark is found at Ser-74 and Ser-86. The chain crosses the membrane as a discontinuously helical span at residues Thr-144–Thr-166. 2 residues coordinate K(+): Asn-155 and Ile-156. Residue Val-159 coordinates chloride. Residues Trp-167–Gly-173 are Extracellular-facing. A helical membrane pass occupies residues Val-174 to Ser-196. Topologically, residues Ala-197 to Glu-220 are cytoplasmic. A helical membrane pass occupies residues Phe-221–Leu-249. The Extracellular segment spans residues Thr-250–His-273. Transmembrane regions (helical) follow at residues Asn-274–Lys-295 and Tyr-296–Phe-324. The Extracellular portion of the chain corresponds to Asp-325–Tyr-443. 3 N-linked (GlcNAc...) asparagine glycosylation sites follow: Asn-336, Asn-355, and Asn-384. A helical membrane pass occupies residues Phe-444 to Arg-464. K(+) contacts are provided by Pro-453 and Thr-456. Chloride is bound at residue Pro-453. Chloride is bound by residues Gly-457 and Ile-458. Residues Ser-465–Ser-474 are Cytoplasmic-facing. A helical transmembrane segment spans residues Ile-475–Phe-497. Residues Gly-498–Pro-528 are Extracellular-facing. Residues Trp-529–Gln-555 traverse the membrane as a helical segment. At Ala-556–Pro-578 the chain is on the cytoplasmic side. 2 helical membrane-spanning segments follow: residues Thr-579 to Ser-597 and Leu-598 to Val-622. Tyr-613 provides a ligand contact to chloride. Residues Gln-623–Lys-636 lie on the Cytoplasmic side of the membrane. The next 2 helical transmembrane spans lie at Tyr-637–Trp-659 and Tyr-660–Tyr-675. At Ile-676–Ser-1106 the chain is on the cytoplasmic side. Residues Gly-688–Val-704 are scissor helix. The segment at Arg-980 to Lys-999 is disordered. A phosphothreonine mark is found at Thr-996 and Thr-1003.

Belongs to the SLC12A transporter family. K/Cl co-transporter subfamily. Homodimer; adopts a domain-swap conformation at the scissor helices connecting the transmembrane domain and C-terminal domain. Heterodimer with K-Cl cotransporter SLC12A5. As to expression, widely expressed. Higher levels in heart, kidney and lung (at protein level).

The protein localises to the cell membrane. The catalysed reaction is K(+)(in) + chloride(in) = K(+)(out) + chloride(out). With respect to regulation, activated by N-ethylmaleimide (NEM). Inhibited by furosemide, DIDS and bumetanide. The inhibition is much stronger in the presence of 50 mM K(+) in the uptake medium. Inhibited by DIOA. Inhibited by WNK3. In terms of biological role, mediates electroneutral potassium-chloride cotransport when activated by cell swelling. May mediate K(+) uptake into Deiters' cells in the cochlea and contribute to K(+) recycling in the inner ear. Important for the survival of cochlear outer and inner hair cells and the maintenance of the organ of Corti. May be required for basolateral Cl(-) extrusion in the kidney and contribute to renal acidification. This is Solute carrier family 12 member 7 from Oryctolagus cuniculus (Rabbit).